Here is a 68-residue protein sequence, read N- to C-terminus: MTFPKISDVTNLDSSSLAEEILVIKRELFDLRLKRATRQDFQPHLFKHSKHRLAQLLTVEKSRTKSTM.

It belongs to the universal ribosomal protein uL29 family.

Its subcellular location is the plastid. The protein resides in the chloroplast. The polypeptide is Large ribosomal subunit protein uL29c (Pyropia yezoensis (Susabi-nori)).